Here is a 753-residue protein sequence, read N- to C-terminus: 5-methyltetrahydropteroyltriglutamate--homocysteine methyltransferase (753 aa).

Residues 17–20 and lysine 117 each bind 5-methyltetrahydropteroyltri-L-glutamate; that span reads RELK. Residues 431 to 433 and glutamate 484 contribute to the L-homocysteine site; that span reads IGS. Residues 431-433 and glutamate 484 contribute to the L-methionine site; that span reads IGS. Residues 515–516 and tryptophan 561 each bind 5-methyltetrahydropteroyltri-L-glutamate; that span reads RC. Aspartate 599 contacts L-homocysteine. Residue aspartate 599 participates in L-methionine binding. A 5-methyltetrahydropteroyltri-L-glutamate-binding site is contributed by glutamate 605. Zn(2+) is bound by residues histidine 641, cysteine 643, and glutamate 665. Histidine 694 (proton donor) is an active-site residue. Zn(2+) is bound at residue cysteine 726.

It belongs to the vitamin-B12 independent methionine synthase family. It depends on Zn(2+) as a cofactor.

The catalysed reaction is 5-methyltetrahydropteroyltri-L-glutamate + L-homocysteine = tetrahydropteroyltri-L-glutamate + L-methionine. It participates in amino-acid biosynthesis; L-methionine biosynthesis via de novo pathway; L-methionine from L-homocysteine (MetE route): step 1/1. Functionally, catalyzes the transfer of a methyl group from 5-methyltetrahydrofolate to homocysteine resulting in methionine formation. The protein is 5-methyltetrahydropteroyltriglutamate--homocysteine methyltransferase of Escherichia coli O6:H1 (strain CFT073 / ATCC 700928 / UPEC).